Consider the following 269-residue polypeptide: Energy-coupling factor transporter ATP-binding protein EcfA1 (269 aa).

The ABC transporter domain occupies 8–242 (IVFKNVSFQY…AEELTRIGLD (235 aa)). 42 to 49 (GHNGSGKS) contributes to the ATP binding site.

The protein belongs to the ABC transporter superfamily. Energy-coupling factor EcfA family. Forms a stable energy-coupling factor (ECF) transporter complex composed of 2 membrane-embedded substrate-binding proteins (S component), 2 ATP-binding proteins (A component) and 2 transmembrane proteins (T component).

It localises to the cell membrane. ATP-binding (A) component of a common energy-coupling factor (ECF) ABC-transporter complex. Unlike classic ABC transporters this ECF transporter provides the energy necessary to transport a number of different substrates. The sequence is that of Energy-coupling factor transporter ATP-binding protein EcfA1 from Staphylococcus aureus (strain USA300).